The sequence spans 189 residues: UPF0398 protein LGAS_1023 (189 aa).

It belongs to the UPF0398 family.

This Lactobacillus gasseri (strain ATCC 33323 / DSM 20243 / BCRC 14619 / CIP 102991 / JCM 1131 / KCTC 3163 / NCIMB 11718 / NCTC 13722 / AM63) protein is UPF0398 protein LGAS_1023.